A 294-amino-acid polypeptide reads, in one-letter code: Dolichol-phosphate mannosyltransferase (294 aa).

The disordered stretch occupies residues 1–27 (MSIALDMDASAKMRKQPGSSGWSTSST). At 1–263 (MSIALDMDAS…QQLVELYRFR (263 aa)) the chain is on the cytoplasmic side. The segment covering 17–27 (PGSSGWSTSST) has biased composition (low complexity). GDP-alpha-D-mannose-binding residues include P35, E39, V70, D72, D123, A124, D125, Q127, R151, K211, R237, and K243. The Mg(2+) site is built by D125 and Q127. Mn(2+) is bound by residues D125 and Q127. Residues 264-284 (FGTVPIVFVLIVLLVLALYIW) form a helical membrane-spanning segment. Over 285–294 (SHVLAPMLGA) the chain is Lumenal.

Belongs to the glycosyltransferase 2 family. Mg(2+) serves as cofactor. The cofactor is Mn(2+). Requires Ca(2+) as cofactor.

It is found in the endoplasmic reticulum membrane. The enzyme catalyses a di-trans,poly-cis-dolichyl phosphate + GDP-alpha-D-mannose = a di-trans,poly-cis-dolichyl beta-D-mannosyl phosphate + GDP. It functions in the pathway protein modification; protein glycosylation. Transfers mannose from GDP-mannose to dolichol monophosphate to form dolichol phosphate mannose (Dol-P-Man) which is the mannosyl donor in pathways leading to N-glycosylation, glycosyl phosphatidylinositol membrane anchoring, and O-mannosylation of proteins. The chain is Dolichol-phosphate mannosyltransferase (DPM1) from Mycosarcoma maydis (Corn smut fungus).